The primary structure comprises 246 residues: Probable transcriptional regulatory protein BVU_3469 (246 aa).

It belongs to the TACO1 family.

The protein resides in the cytoplasm. The sequence is that of Probable transcriptional regulatory protein BVU_3469 from Phocaeicola vulgatus (strain ATCC 8482 / DSM 1447 / JCM 5826 / CCUG 4940 / NBRC 14291 / NCTC 11154) (Bacteroides vulgatus).